A 183-amino-acid chain; its full sequence is Small ribosomal subunit protein uS4c (183 aa).

One can recognise an S4 RNA-binding domain in the interval 82-143 (MRLDNILFRL…KQRSKALIQN (62 aa)).

Belongs to the universal ribosomal protein uS4 family. As to quaternary structure, part of the 30S ribosomal subunit. Contacts protein S5. The interaction surface between S4 and S5 is involved in control of translational fidelity.

The protein localises to the plastid. Its subcellular location is the chloroplast. Functionally, one of the primary rRNA binding proteins, it binds directly to 16S rRNA where it nucleates assembly of the body of the 30S subunit. In terms of biological role, with S5 and S12 plays an important role in translational accuracy. This is Small ribosomal subunit protein uS4c (rps4) from Sparaxis sp. (strain Lejeune 1997).